A 657-amino-acid chain; its full sequence is MKSPTKDSKLFHLKSNFAPTGDQPAAIAKLAEFQTNEQVLLGATGTGKTFTIANVIQKVQLPTVVIAHNKTLAGQLYQELKELFPNNAVEYFISYFDFYQPEAYLPAKGVYIEKSATVNEEIKRLRVSTLHSLSTRKDVIVVGSVASIYPTSSPADFAQYSLWLVVGKEYGLSELKTQLIHLNYVVNKQQLTPGKFRFQGDVVEVFPGYAQDYVLRLSFFDQQLEQIARIDPLTNKVLETLNSFKLGPADEYIVNQNDLGVALDTIKAELKDRLKYFERLNFPERAQRLQTITEHDLADLKAWGVCSGVENYARHLEHRPPHSKPYNIFDYFTKGEWLLVVDESHQTLPQIKGMYNTDISRKQSLIEYGFRLPSALDNRPLSYEEFRQGINKVIYVSATPREEEIQLSHNNVVEQLVRPTYLLDPEVIVKPKDNQVEDLVSEIINQRKHNGRTFVTVLTIKMAENLTDFLKERNIKVAYIHKDIKALERLILLTDLRKGEYECLVGINLLREGLDVPEVSLVAIFDADIPGLPRDERSLIQIIGRAARNVHGRVIMYANTISEQMDKAIKETQRRRTIQMAYNEQHHKTPMTVQKPITLNQPIKLKTKSSEQQKAALIKQLTKEMKQAAANQNYELAIEIRDSIFELEKQFRGKIKS.

The Helicase ATP-binding domain occupies K29–L416. Position 42-49 (G42–T49) interacts with ATP. The short motif at Y95–V118 is the Beta-hairpin element. Positions Q435–I597 constitute a Helicase C-terminal domain. The 36-residue stretch at A615–Q650 folds into the UVR domain.

The protein belongs to the UvrB family. Forms a heterotetramer with UvrA during the search for lesions. Interacts with UvrC in an incision complex.

It localises to the cytoplasm. In terms of biological role, the UvrABC repair system catalyzes the recognition and processing of DNA lesions. A damage recognition complex composed of 2 UvrA and 2 UvrB subunits scans DNA for abnormalities. Upon binding of the UvrA(2)B(2) complex to a putative damaged site, the DNA wraps around one UvrB monomer. DNA wrap is dependent on ATP binding by UvrB and probably causes local melting of the DNA helix, facilitating insertion of UvrB beta-hairpin between the DNA strands. Then UvrB probes one DNA strand for the presence of a lesion. If a lesion is found the UvrA subunits dissociate and the UvrB-DNA preincision complex is formed. This complex is subsequently bound by UvrC and the second UvrB is released. If no lesion is found, the DNA wraps around the other UvrB subunit that will check the other stand for damage. The sequence is that of UvrABC system protein B from Mycoplasma pneumoniae (strain ATCC 29342 / M129 / Subtype 1) (Mycoplasmoides pneumoniae).